A 658-amino-acid polypeptide reads, in one-letter code: UvrABC system protein B (658 aa).

In terms of domain architecture, Helicase ATP-binding spans 25 to 416; it reads QFIHNGAQYS…QEHIAEQIIR (392 aa). Residue 38–45 coordinates ATP; that stretch reads GVTGSGKT. The Beta-hairpin signature appears at 91–114; it reads HFDYYQPEAYIPRRDLFIEKDSSI. The Helicase C-terminal domain occupies 433–607; that stretch reads AVLDLYDEIK…ELKIESSGLS (175 aa). The region spanning 623–658 is the UVR domain; that stretch reads ESIIKELNIKMHQAAKALEFEEAARLRDEIARIRTM.

The protein belongs to the UvrB family. In terms of assembly, forms a heterotetramer with UvrA during the search for lesions. Interacts with UvrC in an incision complex.

Its subcellular location is the cytoplasm. Its function is as follows. The UvrABC repair system catalyzes the recognition and processing of DNA lesions. A damage recognition complex composed of 2 UvrA and 2 UvrB subunits scans DNA for abnormalities. Upon binding of the UvrA(2)B(2) complex to a putative damaged site, the DNA wraps around one UvrB monomer. DNA wrap is dependent on ATP binding by UvrB and probably causes local melting of the DNA helix, facilitating insertion of UvrB beta-hairpin between the DNA strands. Then UvrB probes one DNA strand for the presence of a lesion. If a lesion is found the UvrA subunits dissociate and the UvrB-DNA preincision complex is formed. This complex is subsequently bound by UvrC and the second UvrB is released. If no lesion is found, the DNA wraps around the other UvrB subunit that will check the other stand for damage. The polypeptide is UvrABC system protein B (Helicobacter hepaticus (strain ATCC 51449 / 3B1)).